We begin with the raw amino-acid sequence, 293 residues long: Mitochondrial glycine transporter (293 aa).

Solcar repeat units follow at residues 6–85 (GGVP…SRSA), 102–186 (LQSY…AKEM), and 208–291 (ASAM…LLKL). 6 consecutive transmembrane segments (helical) span residues 12 to 37 (LVSG…TRLQ), 60 to 86 (GTLP…RSAL), 108 to 133 (LLTG…VRYE), 161 to 184 (GAAA…EQAK), 212 to 238 (VNGV…KTRM), and 266 to 284 (GLSL…AWGI).

Belongs to the mitochondrial carrier (TC 2.A.29) family. SLC25A38 subfamily.

The protein localises to the mitochondrion inner membrane. The catalysed reaction is glycine(in) = glycine(out). Mitochondrial glycine transporter that imports glycine into the mitochondrial matrix. Plays an important role in providing glycine for the first enzymatic step in heme biosynthesis, the condensation of glycine with succinyl-CoA to produce 5-aminolevulinate (ALA) in the mitochondrial matrix. The chain is Mitochondrial glycine transporter from Eremothecium gossypii (strain ATCC 10895 / CBS 109.51 / FGSC 9923 / NRRL Y-1056) (Yeast).